A 200-amino-acid polypeptide reads, in one-letter code: Holliday junction branch migration complex subunit RuvA (200 aa).

A domain I region spans residues 1–64 (MIGRIVGTLI…EDSHTLYGFI (64 aa)). The interval 65–143 (DKNERALFRV…QAAKTDLFSA (79 aa)) is domain II. The segment at 144-149 (PAVLRQ) is flexible linker. Positions 150 to 200 (VQADPRQEAEAALISLGYKPQEAAKAIAGVPVDAANSEDVIKAALKGMLRK) are domain III.

The protein belongs to the RuvA family. As to quaternary structure, homotetramer. Forms an RuvA(8)-RuvB(12)-Holliday junction (HJ) complex. HJ DNA is sandwiched between 2 RuvA tetramers; dsDNA enters through RuvA and exits via RuvB. An RuvB hexamer assembles on each DNA strand where it exits the tetramer. Each RuvB hexamer is contacted by two RuvA subunits (via domain III) on 2 adjacent RuvB subunits; this complex drives branch migration. In the full resolvosome a probable DNA-RuvA(4)-RuvB(12)-RuvC(2) complex forms which resolves the HJ.

The protein resides in the cytoplasm. In terms of biological role, the RuvA-RuvB-RuvC complex processes Holliday junction (HJ) DNA during genetic recombination and DNA repair, while the RuvA-RuvB complex plays an important role in the rescue of blocked DNA replication forks via replication fork reversal (RFR). RuvA specifically binds to HJ cruciform DNA, conferring on it an open structure. The RuvB hexamer acts as an ATP-dependent pump, pulling dsDNA into and through the RuvAB complex. HJ branch migration allows RuvC to scan DNA until it finds its consensus sequence, where it cleaves and resolves the cruciform DNA. The chain is Holliday junction branch migration complex subunit RuvA from Marinomonas sp. (strain MWYL1).